The following is a 213-amino-acid chain: Uridine kinase (213 aa).

15 to 22 (GASASGKS) contacts ATP.

The protein belongs to the uridine kinase family.

It localises to the cytoplasm. The catalysed reaction is uridine + ATP = UMP + ADP + H(+). It catalyses the reaction cytidine + ATP = CMP + ADP + H(+). It functions in the pathway pyrimidine metabolism; CTP biosynthesis via salvage pathway; CTP from cytidine: step 1/3. Its pathway is pyrimidine metabolism; UMP biosynthesis via salvage pathway; UMP from uridine: step 1/1. This chain is Uridine kinase, found in Salmonella agona (strain SL483).